A 413-amino-acid chain; its full sequence is Phosphopentomutase (413 aa).

6 residues coordinate Mn(2+): Asp-11, Asp-306, His-311, Asp-347, His-348, and His-359.

This sequence belongs to the phosphopentomutase family. Mn(2+) serves as cofactor.

The protein resides in the cytoplasm. The enzyme catalyses 2-deoxy-alpha-D-ribose 1-phosphate = 2-deoxy-D-ribose 5-phosphate. It carries out the reaction alpha-D-ribose 1-phosphate = D-ribose 5-phosphate. It participates in carbohydrate degradation; 2-deoxy-D-ribose 1-phosphate degradation; D-glyceraldehyde 3-phosphate and acetaldehyde from 2-deoxy-alpha-D-ribose 1-phosphate: step 1/2. Its function is as follows. Isomerase that catalyzes the conversion of deoxy-ribose 1-phosphate (dRib-1-P) and ribose 1-phosphate (Rib-1-P) to deoxy-ribose 5-phosphate (dRib-5-P) and ribose 5-phosphate (Rib-5-P), respectively. The polypeptide is Phosphopentomutase (Helicobacter pylori (strain G27)).